A 626-amino-acid chain; its full sequence is DNA mismatch repair protein MutL (626 aa).

This sequence belongs to the DNA mismatch repair MutL/HexB family.

In terms of biological role, this protein is involved in the repair of mismatches in DNA. It is required for dam-dependent methyl-directed DNA mismatch repair. May act as a 'molecular matchmaker', a protein that promotes the formation of a stable complex between two or more DNA-binding proteins in an ATP-dependent manner without itself being part of a final effector complex. The chain is DNA mismatch repair protein MutL from Chlorobium luteolum (strain DSM 273 / BCRC 81028 / 2530) (Pelodictyon luteolum).